We begin with the raw amino-acid sequence, 205 residues long: Tegument protein UL51 homolog (205 aa).

A lipid anchor (S-palmitoyl cysteine; by host) is attached at Cys-4.

The protein belongs to the herpesviridae UL51 family. Oligomerizes. Interacts with U75; this interaction mediates U75 incorporation to virions. Phosphorylated. In terms of processing, palmitoylation is necessary for Golgi localization.

Its subcellular location is the virion tegument. It is found in the host cytoplasm. The protein localises to the host Golgi apparatus. Its function is as follows. Plays several roles during the time course of infection, including egress of virus particles from the perinuclear space and secondary envelopment of cytoplasmic capsids that bud into specific trans-Golgi network (TGN)-derived membranes. The sequence is that of Tegument protein UL51 homolog (U44) from Homo sapiens (Human).